The following is a 3004-amino-acid chain: Guanylate cyclase beta (3004 aa).

Over 1 to 66 (MKETDKIKSE…FSLYNFIRRL (66 aa)) the chain is Cytoplasmic. The helical transmembrane segment at 67–87 (ISLDAVIVYTLFMTVYIFSEI) threads the bilayer. Residues 88 to 94 (SQGITKK) lie on the Extracellular side of the membrane. The helical transmembrane segment at 95 to 115 (YLFVDTAISLFLNIGILVVIE) threads the bilayer. At 116–300 (SLFELKLLKD…TFCIKMNNVV (185 aa)) the chain is on the cytoplasmic side. Residues 301–321 (YYLIFMYILFVLLSIIIKAIF) traverse the membrane as a helical segment. Over 322 to 334 (YRKGKLLENSNDT) the chain is Extracellular. N-linked (GlcNAc...) asparagine glycosylation occurs at Asn332. The helical transmembrane segment at 335–355 (FFTVLEDFIGLYILVLPVMLY) threads the bilayer. Over 356-991 (SEKSLIYIIQ…GRLNRFSLCR (636 aa)) the chain is Cytoplasmic. Residues 992–1012 (AFLWIIYLKVMIGSFYFFHNF) form a helical membrane-spanning segment. Over 1013–1022 (DNFFSGSSIS) the chain is Extracellular. The helical transmembrane segment at 1023-1043 (SILYSQTAFAIFHYSLIVAFA) threads the bilayer. Residues 1044–1072 (SYEIDIPYKFIRNFPYIYQLARRKYFLNN) are Cytoplasmic-facing. Residues 1073–1093 (TIIFLNIVESIFSSFISYYIL) traverse the membrane as a helical segment. Residues 1094–1105 (RGNLFNLITHRK) are Extracellular-facing. A helical transmembrane segment spans residues 1106–1126 (FTFHIFVLNFFLISEKILLFS). At 1127–1130 (KTWH) the chain is on the cytoplasmic side. A helical transmembrane segment spans residues 1131 to 1151 (IFFFIMTIIIVSILFIYINIY). Residues 1152–1171 (TLVDCLITGKCEFSLFDPED) are Extracellular-facing. Residues 1172 to 1192 (SYFWISLLPILYINFIIDKFM) traverse the membrane as a helical segment. The Cytoplasmic portion of the chain corresponds to 1193-1297 (KFVKNKIYPD…YEKRNKLKLR (105 aa)). The helical transmembrane segment at 1298–1318 (IIILLLFIIFLITFTIQIIIS) threads the bilayer. Residues 1319 to 1327 (KFIEKKLHS) are Extracellular-facing. A helical transmembrane segment spans residues 1328–1348 (LSYLTVIYYIVAVLYLIKILI). Topologically, residues 1349–1353 (RNKTN) are cytoplasmic. The helical transmembrane segment at 1354-1374 (YTYFYIIGKLLLVIGYLLEIS) threads the bilayer. The Extracellular segment spans residues 1375–1394 (ENSVNNIINMLVTYSFTVCY). The helical transmembrane segment at 1395–1415 (IFFISFKILEGLVMCIIILSI) threads the bilayer. At 1416-1457 (AIWVYYHKNNNLNAMCTDFCDNPYTSLDNLEYINISCICKQQ) the chain is on the cytoplasmic side. A helical transmembrane segment spans residues 1458–1478 (IFTFLICTLSFTLICLFMKYY). Residues 1479–1500 (EIYYLKKKFLTRYKQKVNLGKQ) lie on the Extracellular side of the membrane. Residues 1501–1521 (IEILHTMLPSFLVEYLLVSDP) form a helical membrane-spanning segment. Topologically, residues 1522-2563 (KADGIMVGKN…EIINIDLTKK (1042 aa)) are cytoplasmic. One can recognise a Guanylate cyclase 1 domain in the interval 1541–1696 (SVIFCDIDDF…DTVNTASRMK (156 aa)). Residues 2463–2476 (TMSNSKSGQTNITT) are compositionally biased toward polar residues. Positions 2463–2491 (TMSNSKSGQTNITTDNKKSQIKKNGDVNK) are disordered. The span at 2477-2488 (DNKKSQIKKNGD) shows a compositional bias: basic and acidic residues. The chain crosses the membrane as a helical span at residues 2564–2584 (LIIIFVISELILSLCNVIELS). Topologically, residues 2585–2594 (YYENKETPND) are extracellular. A helical transmembrane segment spans residues 2595–2615 (FIVIIWLIRSIYLFTITFIWL). At 2616-2634 (LLKTKLKEYKDNSSKMMWT) the chain is on the cytoplasmic side. The helical transmembrane segment at 2635–2655 (TFILNIFLSSWGIIMIDLACI) threads the bilayer. At 2656-2667 (HYSNLVGNSRER) the chain is on the extracellular side. Residues 2668–2688 (SIFFMKDATELIISMQLIFVK) traverse the membrane as a helical segment. The Cytoplasmic portion of the chain corresponds to 2689-2695 (NMLFKHK). Residues 2696–2716 (FFFFVFFFVFLMYSFFKLFVI) traverse the membrane as a helical segment. Residues 2717–2722 (HVCELR) lie on the Extracellular side of the membrane. Residues 2723 to 2743 (ICCSILLILSINILYFWYSEY) traverse the membrane as a helical segment. Residues 2744–3004 (LDRTQYIIKR…KLREQNKVKG (261 aa)) lie on the Cytoplasmic side of the membrane. Residues 2793–2927 (AFLFADIVGF…LDVLIANHIE (135 aa)) form the Guanylate cyclase 2 domain. Mg(2+) contacts are provided by Asp2798, Ile2799, and Asp2842.

The protein in the N-terminal section; belongs to the cation transport ATPase (P-type) (TC 3.A.3) family. Type IV subfamily. This sequence in the C-terminal section; belongs to the adenylyl cyclase class-4/guanylyl cyclase family. It depends on Mg(2+) as a cofactor. Mn(2+) is required as a cofactor.

The protein resides in the membrane. It catalyses the reaction GTP = 3',5'-cyclic GMP + diphosphate. Catalyzes the synthesis of the second messenger cGMP from GTP. Probably by regulating cGMP production, required for ookinete gliding motility, which is necessary for the ookinete to traverse the midgut epithelium of the mosquito. This is Guanylate cyclase beta from Plasmodium berghei (strain Anka).